A 707-amino-acid polypeptide reads, in one-letter code: Protein O-mannosyl-transferase TMEM260 (707 aa).

8 consecutive transmembrane segments (helical) span residues 28–48, 71–91, 94–114, 141–161, 189–209, 222–242, 318–338, and 356–376; these read GGVA…PPSV, YPLF…GSIA, VNLL…FTVF, IAAE…ALTV, NQHT…FQLL, LSLY…SSYL, NPSL…FFAW, and FWMQ…AAVV. Over 377–707 the chain is Lumenal; the sequence is SETNRVLNSN…LQSLRNRKNV (331 aa). N-linked (GlcNAc...) asparagine glycans are attached at residues Asn407, Asn535, and Asn568.

Belongs to the glycosyltransferase 117 (GT117) family. Expressed in brain, heart, kidney, liver, lung, pancreas and placenta but are not detected in skeletal muscle.

It localises to the endoplasmic reticulum membrane. The protein resides in the membrane. The enzyme catalyses a di-trans,poly-cis-dolichyl beta-D-mannosyl phosphate + L-seryl-[protein] = 3-O-(alpha-D-mannosyl)-L-seryl-[protein] + a di-trans,poly-cis-dolichyl phosphate + H(+). It carries out the reaction a di-trans,poly-cis-dolichyl beta-D-mannosyl phosphate + L-threonyl-[protein] = 3-O-(alpha-D-mannosyl)-L-threonyl-[protein] + a di-trans,poly-cis-dolichyl phosphate + H(+). O-mannosyl-transferase that transfers mannosyl residues to the hydroxyl group of serine or threonine residues of proteins. Specifically glycosylates the IPT/TIG domain of target proteins, such as MET and MST1R/RON. TMEM260-mediated O-mannosylated residues are composed of single mannose glycans that are not elongated or modified. The sequence is that of Protein O-mannosyl-transferase TMEM260 from Homo sapiens (Human).